The chain runs to 27 residues: Pregnancy-associated glycoprotein 62 (27 aa).

This sequence belongs to the peptidase A1 family. In terms of processing, glycosylated. Placenta.

This Capra hircus (Goat) protein is Pregnancy-associated glycoprotein 62 (PAG62).